A 350-amino-acid polypeptide reads, in one-letter code: Hydroxymethylglutaryl-CoA synthase (350 aa).

Residue glutamate 83 is the Proton donor/acceptor of the active site. Cysteine 115 serves as the catalytic Acyl-thioester intermediate. (3S)-3-hydroxy-3-methylglutaryl-CoA-binding residues include cysteine 115 and threonine 156. Arginine 204 serves as a coordination point for CoA. Threonine 206 and histidine 239 together coordinate (3S)-3-hydroxy-3-methylglutaryl-CoA. The Proton donor/acceptor role is filled by histidine 239. A CoA-binding site is contributed by lysine 244. Positions 271 and 301 each coordinate (3S)-3-hydroxy-3-methylglutaryl-CoA.

Belongs to the thiolase-like superfamily. Archaeal HMG-CoA synthase family. As to quaternary structure, interacts with acetoacetyl-CoA thiolase that catalyzes the precedent step in the pathway and with a DUF35 protein. The acetoacetyl-CoA thiolase/HMG-CoA synthase complex channels the intermediate via a fused CoA-binding site, which allows for efficient coupling of the endergonic thiolase reaction with the exergonic HMGCS reaction.

The enzyme catalyses acetoacetyl-CoA + acetyl-CoA + H2O = (3S)-3-hydroxy-3-methylglutaryl-CoA + CoA + H(+). Its pathway is metabolic intermediate biosynthesis; (R)-mevalonate biosynthesis; (R)-mevalonate from acetyl-CoA: step 2/3. Catalyzes the condensation of acetyl-CoA with acetoacetyl-CoA to form 3-hydroxy-3-methylglutaryl-CoA (HMG-CoA). Functions in the mevalonate (MVA) pathway leading to isopentenyl diphosphate (IPP), a key precursor for the biosynthesis of isoprenoid compounds that are building blocks of archaeal membrane lipids. The sequence is that of Hydroxymethylglutaryl-CoA synthase from Pyrococcus furiosus (strain ATCC 43587 / DSM 3638 / JCM 8422 / Vc1).